We begin with the raw amino-acid sequence, 860 residues long: Pre-neck appendage protein (860 aa).

Residues Glu-309 and Asp-311 each coordinate Mg(2+). Residue Glu-701 is the Nucleophile of the active site. 752–801 (WQGQYLKNEFGGLIYETVEIDEGVFEKMPKINPSYNPKLEYLSRGERPEW) contributes to the ATP binding site.

In terms of assembly, homotrimer. Each appendage is a homotrimer of gp12*. Requires Mg(2+) as cofactor. Post-translationally, autocleaved to produce the 74 kDa gp12* assembly attached to the phage particles. Autocleavage of the C-terminus is a posttrimerization event that is followed by an ATP-dependent release.

The protein resides in the virion. Its function is as follows. Structural component of the 12 appendages that hang from the lower collar. Adhesion protein that binds to the host cell surface during virus attachment and mediates teichoic acids degradation. This is Pre-neck appendage protein (12) from Bacillus subtilis (Bacteriophage B103).